Consider the following 310-residue polypeptide: ADP-L-glycero-D-manno-heptose-6-epimerase (310 aa).

NADP(+) contacts are provided by residues 10-11 (FI), 31-32 (DN), Lys38, Lys53, 75-79 (EGACS), and Asn92. The active-site Proton acceptor is the Tyr140. Lys144 lines the NADP(+) pocket. Asn169 is a binding site for substrate. NADP(+) is bound by residues Val170 and Lys178. The active-site Proton acceptor is the Lys178. Residues Ser180, His187, 201-204 (FEGS), Arg209, and Tyr272 each bind substrate.

It belongs to the NAD(P)-dependent epimerase/dehydratase family. HldD subfamily. Homopentamer. It depends on NADP(+) as a cofactor.

The catalysed reaction is ADP-D-glycero-beta-D-manno-heptose = ADP-L-glycero-beta-D-manno-heptose. The protein operates within nucleotide-sugar biosynthesis; ADP-L-glycero-beta-D-manno-heptose biosynthesis; ADP-L-glycero-beta-D-manno-heptose from D-glycero-beta-D-manno-heptose 7-phosphate: step 4/4. Functionally, catalyzes the interconversion between ADP-D-glycero-beta-D-manno-heptose and ADP-L-glycero-beta-D-manno-heptose via an epimerization at carbon 6 of the heptose. The chain is ADP-L-glycero-D-manno-heptose-6-epimerase from Salmonella heidelberg (strain SL476).